Reading from the N-terminus, the 162-residue chain is MNNLIMLVTNAVTLSEAAGGLFDFNATLPLQALQFILLTVLLTFIFYKPIGKLLEERETFISNNLAEASAKLLKADELCEQYETQLKEAKTGAQDVIAKAESEAKGIVAQEITQARADAASLIAQTNKELEAQKKLALQQLETQIDELSQLIKEKLLGKVVL.

A helical transmembrane segment spans residues 26–46 (ATLPLQALQFILLTVLLTFIF).

Belongs to the ATPase B chain family. F-type ATPases have 2 components, F(1) - the catalytic core - and F(0) - the membrane proton channel. F(1) has five subunits: alpha(3), beta(3), gamma(1), delta(1), epsilon(1). F(0) has four main subunits: a(1), b(1), b'(1) and c(10-14). The alpha and beta chains form an alternating ring which encloses part of the gamma chain. F(1) is attached to F(0) by a central stalk formed by the gamma and epsilon chains, while a peripheral stalk is formed by the delta, b and b' chains.

It is found in the plastid. The protein localises to the chloroplast thylakoid membrane. F(1)F(0) ATP synthase produces ATP from ADP in the presence of a proton or sodium gradient. F-type ATPases consist of two structural domains, F(1) containing the extramembraneous catalytic core and F(0) containing the membrane proton channel, linked together by a central stalk and a peripheral stalk. During catalysis, ATP synthesis in the catalytic domain of F(1) is coupled via a rotary mechanism of the central stalk subunits to proton translocation. Functionally, component of the F(0) channel, it forms part of the peripheral stalk, linking F(1) to F(0). The b'-subunit is a diverged and duplicated form of b found in plants and photosynthetic bacteria. This chain is ATP synthase subunit b', chloroplastic, found in Emiliania huxleyi (Coccolithophore).